A 347-amino-acid chain; its full sequence is Putative coenzyme F420-dependent oxidoreductase Rv3520c (347 aa).

In Mycobacterium tuberculosis (strain ATCC 25618 / H37Rv), this protein is Putative coenzyme F420-dependent oxidoreductase Rv3520c.